A 266-amino-acid chain; its full sequence is uncharacterized protein (266 aa).

The PH domain occupies 35-131; that stretch reads VLVGEGVLVK…WMLHIERCVT (97 aa). Residues 152 to 212 form an FYVE-type zinc finger; it reads DGEAVKCMVC…VCDHCFDSLS (61 aa). 8 residues coordinate Zn(2+): C158, C161, C175, C178, C183, C186, C204, and C207. Residues 213 to 266 are disordered; sequence SATPGQEESEPKTGNRLHHEDSSSDSEDEVNGSGRSSNESRPTFYREDVQQPAT. Composition is skewed to basic and acidic residues over residues 221-234 and 256-266; these read SEPKTGNRLHHEDS and FYREDVQQPAT.

This is an uncharacterized protein from Caenorhabditis elegans.